Reading from the N-terminus, the 621-residue chain is Frizzled and smoothened-like protein H (621 aa).

A signal peptide spans M1–G21. At Q22–D246 the chain is on the extracellular side. An FZ domain is found at V27–I166. 2 cysteine pairs are disulfide-bonded: C32–C103 and C46–C96. 5 N-linked (GlcNAc...) asparagine glycosylation sites follow: N60, N107, N163, N176, and N206. A helical membrane pass occupies residues V247 to N267. The Cytoplasmic portion of the chain corresponds to P268–N277. A helical transmembrane segment spans residues L278–G298. Topologically, residues S299 to C318 are extracellular. Residues V319–G339 form a helical membrane-spanning segment. Topologically, residues L340 to R359 are cytoplasmic. The chain crosses the membrane as a helical span at residues Y360–G380. At Q381 to S400 the chain is on the extracellular side. A helical transmembrane segment spans residues M401–V421. At M422–P464 the chain is on the cytoplasmic side. Residues M465–I485 traverse the membrane as a helical segment. Residues N486–S520 are Extracellular-facing. A helical membrane pass occupies residues L521 to L541. The Cytoplasmic segment spans residues S542–L621. A compositionally biased stretch (low complexity) spans F575 to S594. Positions F575–S603 are disordered.

The protein belongs to the G-protein coupled receptor Fz/Smo family.

Its subcellular location is the membrane. This Dictyostelium discoideum (Social amoeba) protein is Frizzled and smoothened-like protein H (fslH).